An 850-amino-acid polypeptide reads, in one-letter code: Pre-mRNA-splicing factor SYF1 (850 aa).

HAT repeat units lie at residues 25–57 (IQPS…FKQG), 58–90 (SPQK…ERTL), 100–132 (NSFE…FLMI), 134–168 (EKIT…FILK), 171–203 (IPSL…KIKE), 281–316 (AQFE…FEDS), 477–509 (KKQN…LEES), 511–543 (GTFH…YLEE), 545–579 (KYFE…KFIQ), 584–618 (MKLE…FEEQ), and 692–726 (GEID…FEKL). Residues 761 to 771 (NNKDDKDDKNQ) show a composition bias toward basic and acidic residues. Positions 761-837 (NNKDDKDDKN…EEEEEEEDQL (77 aa)) are disordered. Residues 772–792 (QQKQQQQQQEKQQQQQQQQQQ) are compositionally biased toward low complexity. A compositionally biased stretch (polar residues) spans 793–812 (ASTLTKSKPVTVSLPETIQY). Over residues 818–836 (NDDEINLDDDEEEEEEEDQ) the composition is skewed to acidic residues.

The protein belongs to the crooked-neck family. In terms of assembly, identified in the spliceosome C complex.

The protein localises to the nucleus. Involved in pre-mRNA splicing as component of the spliceosome. Involved in transcription-coupled repair (TCR), transcription and pre-mRNA splicing. The chain is Pre-mRNA-splicing factor SYF1 (xab2) from Dictyostelium discoideum (Social amoeba).